Here is a 197-residue protein sequence, read N- to C-terminus: Nucleoid occlusion factor SlmA (197 aa).

The region spanning 7–67 (INRREHILQC…GLIEFIEESL (61 aa)) is the HTH tetR-type domain. A DNA-binding region (H-T-H motif) is located at residues 30-49 (TTAKLAAEVGVSEAALYRHF). A coiled-coil region spans residues 109 to 136 (DALLGENERLRSRISQLFSKIETHLKQI).

This sequence belongs to the nucleoid occlusion factor SlmA family. Homodimer. Interacts with FtsZ.

The protein resides in the cytoplasm. Its subcellular location is the nucleoid. Its function is as follows. Required for nucleoid occlusion (NO) phenomenon, which prevents Z-ring formation and cell division over the nucleoid. Acts as a DNA-associated cell division inhibitor that binds simultaneously chromosomal DNA and FtsZ, and disrupts the assembly of FtsZ polymers. SlmA-DNA-binding sequences (SBS) are dispersed on non-Ter regions of the chromosome, preventing FtsZ polymerization at these regions. This Shewanella pealeana (strain ATCC 700345 / ANG-SQ1) protein is Nucleoid occlusion factor SlmA.